The primary structure comprises 279 residues: Ribonuclease Z (279 aa).

Zn(2+)-binding residues include histidine 64, histidine 66, aspartate 68, histidine 69, histidine 134, aspartate 191, and histidine 245. The active-site Proton acceptor is aspartate 68.

The protein belongs to the RNase Z family. In terms of assembly, homodimer. It depends on Zn(2+) as a cofactor.

It carries out the reaction Endonucleolytic cleavage of RNA, removing extra 3' nucleotides from tRNA precursor, generating 3' termini of tRNAs. A 3'-hydroxy group is left at the tRNA terminus and a 5'-phosphoryl group is left at the trailer molecule.. Functionally, zinc phosphodiesterase, which displays some tRNA 3'-processing endonuclease activity. Probably involved in tRNA maturation, by removing a 3'-trailer from precursor tRNA. This is Ribonuclease Z from Methanopyrus kandleri (strain AV19 / DSM 6324 / JCM 9639 / NBRC 100938).